A 649-amino-acid polypeptide reads, in one-letter code: Ubiquitin-associated and SH3 domain-containing protein B (649 aa).

The residue at position 20 (S20) is a Phosphoserine. Residue T23 is modified to Phosphothreonine. In terms of domain architecture, UBA spans 27-76 (NRQQRPGTIKHGSALDVLLSMGFPRARAQKALASTGGRSVQAACDWLFSH). The region spanning 254–319 (ANHETLQVIY…PENYITKADE (66 aa)) is the SH3 domain. The interval 380-649 (GPQKRCLFVC…FNWRETLLQE (270 aa)) is protein tyrosine phosphatase. Residue R390 is part of the active site. The active-site Tele-phosphohistidine intermediate is the H391. H576 is a catalytic residue.

In terms of assembly, homodimer. Interacts with JAK2 (in vitro). Interacts with CBL. Part of a complex containing CBL and activated EGFR. Interacts with ubiquitin and with mono-ubiquitinated proteins. Interacts with ZAP70 (ubiquitinated form).

It localises to the cytoplasm. The protein resides in the nucleus. The enzyme catalyses O-phospho-L-tyrosyl-[protein] + H2O = L-tyrosyl-[protein] + phosphate. Its function is as follows. Interferes with CBL-mediated down-regulation and degradation of receptor-type tyrosine kinases. Promotes accumulation of activated target receptors, such as T-cell receptors and EGFR, on the cell surface. Exhibits tyrosine phosphatase activity toward several substrates including EGFR, FAK, SYK, and ZAP70. Down-regulates proteins that are dually modified by both protein tyrosine phosphorylation and ubiquitination. The chain is Ubiquitin-associated and SH3 domain-containing protein B (UBASH3B) from Homo sapiens (Human).